Here is a 313-residue protein sequence, read N- to C-terminus: MGSQNQGSTTTTSAGNPDSLVTDKVDQKGQVQTSGQNLSDTNYTNLSPNFTPTSDWPNALSFTNKNNAQRAQLFLHGLLGSIPVLVNKSGENNEKFQATDQKWSYTELKSDQTKLNLPAYGEVNGLLNPALVETYFGTTRTSSTANQNSTTVPGIGFKIPEQNNDSKAVLITPGLAWTPQDVGNLVVSGTSFSFQLGGWLVSFTDFVKPRAGYLGLQLTGLDASDATQRALIWAPPALSGLSWQLGQPVGPRGECVGFEGGVGGSSSVRLARIYHHRNRGYLTGAPECFGLSGECGGSECLQAKHELRPNPIH.

Residues 1–16 (MGSQNQGSTTTTSAGN) show a composition bias toward low complexity. The tract at residues 1–44 (MGSQNQGSTTTTSAGNPDSLVTDKVDQKGQVQTSGQNLSDTNYT) is disordered. Over residues 29 to 44 (GQVQTSGQNLSDTNYT) the composition is skewed to polar residues.

It belongs to the adhesin P1 family.

The polypeptide is Putative adhesin P1-like protein MPN_202 (Mycoplasma pneumoniae (strain ATCC 29342 / M129 / Subtype 1) (Mycoplasmoides pneumoniae)).